An 86-amino-acid polypeptide reads, in one-letter code: Small ribosomal subunit protein bS16 (86 aa).

The protein belongs to the bacterial ribosomal protein bS16 family.

The protein is Small ribosomal subunit protein bS16 of Hamiltonella defensa subsp. Acyrthosiphon pisum (strain 5AT).